We begin with the raw amino-acid sequence, 347 residues long: NADH-ubiquinone oxidoreductase chain 2 (347 aa).

10 helical membrane-spanning segments follow: residues 13-33 (IILGTSIVITSSHWLTVWIGF), 59-79 (YFLIQATASMLLMLAVTINLL), 84-104 (WAVSNMIDPLALTIMTLALAM), 111-131 (FHFWVPEVTQGVPLLSGLILL), 149-169 (IDPTLILTMSILSVLVGGWGG), 178-198 (IMAYSSISHMGWMTAILIYNP), 201-221 (TILNLLLYIMMTSTTFILLII), 240-260 (IAIIILTTMLSLGGLPPLTGF), 276-296 (IALSLFMAMAALLNLYFYTRL), and 326-346 (LSPLIIISTMILPLTPTMSAL).

It belongs to the complex I subunit 2 family. As to quaternary structure, core subunit of respiratory chain NADH dehydrogenase (Complex I) which is composed of 45 different subunits. Interacts with TMEM242.

The protein localises to the mitochondrion inner membrane. The catalysed reaction is a ubiquinone + NADH + 5 H(+)(in) = a ubiquinol + NAD(+) + 4 H(+)(out). In terms of biological role, core subunit of the mitochondrial membrane respiratory chain NADH dehydrogenase (Complex I) that is believed to belong to the minimal assembly required for catalysis. Complex I functions in the transfer of electrons from NADH to the respiratory chain. The immediate electron acceptor for the enzyme is believed to be ubiquinone. The sequence is that of NADH-ubiquinone oxidoreductase chain 2 from Chrotopterus auritus (Peters's woolly false vampire bat).